A 129-amino-acid chain; its full sequence is uncharacterized protein (129 aa).

The region spanning 6-129 (QVHHIAIIAT…DGLPLELYEQ (124 aa)) is the VOC domain. A divalent metal cation contacts are provided by histidine 9, glutamate 57, histidine 78, and glutamate 125.

To B.subtilis YwkD.

This is an uncharacterized protein from Escherichia coli (strain K12).